A 236-amino-acid polypeptide reads, in one-letter code: MAPDPWFSTYDSTCQIAQEIAEKIQQRNQYERNGENTTKLTVTIRALLQKLKEKIALLKDLLLRAVATHQITQLEGDRRQNLLDDLVTRERLLLASFKNEGAEPDLIRSSLMTGGAKRGAPNPWLLEEPEETRGLGFDEIRQQQQKIIQEQDAGLDALSSIISRQKQMGQEIGNELDEQNEIIDDLANLVENTDEKLRTETRRVNLVDRKSTSCGMIMVILLLLVAIVVVAVWPTK.

At Met-1 to Gly-215 the chain is on the cytoplasmic side. A coiled-coil region spans residues Val-42–Ala-65. One can recognise a t-SNARE coiled-coil homology domain in the interval Gln-145–Val-207. Residue Ser-160 is modified to Phosphoserine. A helical; Anchor for type IV membrane protein transmembrane segment spans residues Met-216–Val-232. Topologically, residues Trp-233–Lys-236 are vesicular.

It belongs to the syntaxin family. Forms a SNARE complex with STX7, VTI1B and VAMP8 which functions in the homotypic fusion of late endosomes. Part of the SNARE core complex containing STX7, VAMP8 and VTI1B. Interacts with VAMP8. Interacts with HECTD3. Interacts with TPC1. Ubiquitinated by HECTD3.

It localises to the membrane. Its function is as follows. Vesicle trafficking protein that functions in the early secretory pathway, possibly by mediating retrograde transport from cis-Golgi membranes to the ER. The protein is Syntaxin-8 (STX8) of Bos taurus (Bovine).